Here is a 679-residue protein sequence, read N- to C-terminus: Recombination repair protein 1 (679 aa).

A disordered region spans residues 1-407 (MPRVKAVKKQ…TKKAKKAETK (407 aa)). The segment covering 45–55 (AKGKPRARKAT) has biased composition (basic residues). Over residues 106-116 (ATAEAEPEPKV) the composition is skewed to basic and acidic residues. A phosphothreonine mark is found at T133 and T140. S142 carries the post-translational modification Phosphoserine. 2 stretches are compositionally biased toward basic and acidic residues: residues 179 to 189 (EPPKQRARKEA) and 203 to 214 (SKEKVQKAETAA). S258 carries the post-translational modification Phosphoserine. Positions 312-347 (KKEGKEPAPGKKQKKSADKENGVVEEEAKPSTETKP) are enriched in basic and acidic residues. Residues 428–679 (KICSWNVAGL…HCPITIFFNI (252 aa)) form an AP endonuclease region. E461 serves as a coordination point for Mg(2+). Y533 is an active-site residue. D572, N574, and D669 together coordinate Mg(2+). D572 serves as the catalytic Proton donor/acceptor.

Belongs to the DNA repair enzymes AP/ExoA family. Interacts with the zeta DNA polymerase complex; interacts (via the N-terminus) with the accessory subunit PolZ2/Rev7 and also interacts with the catalytic component PolZ1, however the interaction with PolZ1 is likely via PolZ2. The cofactor is Mg(2+). Requires Mn(2+) as cofactor.

Its subcellular location is the nucleus. The enzyme catalyses Exonucleolytic cleavage in the 3'- to 5'-direction to yield nucleoside 5'-phosphates.. Its function is as follows. Plays a role in the cellular response to oxidative stress by promoting DNA repair mechanisms such as base excision repair and possibly homologous recombination repair. Functions as an apurinic/apyrimidinic (AP) endodeoxyribonuclease in the DNA base excision repair (BER) pathway of DNA lesions induced by oxidative and alkylating agents. Likely to initiate repair of AP sites in DNA by catalyzing hydrolytic incision of the phosphodiester backbone immediately adjacent to the damage, generating a single-strand break with 5'-deoxyribose phosphate and 3'-hydroxyl ends. Has a 3'-5' exoribonuclease activity on mismatched deoxyribonucleotides at the 3' termini of nicked or gapped DNA molecules during short-patch BER. Has apurinic endonuclease and double-stranded DNA 3'-exonuclease activities and carries out single-stranded DNA renaturation in a Mg(2+)-dependent manner. Activity is more efficient in purine-rich regions of dsDNA than in pyrimidine-rich regions. This is Recombination repair protein 1 from Drosophila melanogaster (Fruit fly).